Consider the following 598-residue polypeptide: Probable translation initiation factor IF-2 (598 aa).

A tr-type G domain is found at 3-223 (LRCPIVSVLG…ISGLAQRFME (221 aa)). Residues 12–19 (GHVDHGKT) form a G1 region. A GTP-binding site is contributed by 12 to 19 (GHVDHGKT). Positions 37 to 41 (GITQH) are G2. Positions 76–79 (DTPG) are G3. Residues 76 to 80 (DTPGH) and 130 to 133 (NKID) contribute to the GTP site. The tract at residues 130–133 (NKID) is G4. Positions 200–202 (SAM) are G5.

Belongs to the TRAFAC class translation factor GTPase superfamily. Classic translation factor GTPase family. IF-2 subfamily.

Functionally, function in general translation initiation by promoting the binding of the formylmethionine-tRNA to ribosomes. Seems to function along with eIF-2. The protein is Probable translation initiation factor IF-2 of Methanococcus aeolicus (strain ATCC BAA-1280 / DSM 17508 / OCM 812 / Nankai-3).